The sequence spans 581 residues: Proline--tRNA ligase (581 aa).

It belongs to the class-II aminoacyl-tRNA synthetase family. ProS type 1 subfamily. As to quaternary structure, homodimer.

The protein resides in the cytoplasm. It catalyses the reaction tRNA(Pro) + L-proline + ATP = L-prolyl-tRNA(Pro) + AMP + diphosphate. Its function is as follows. Catalyzes the attachment of proline to tRNA(Pro) in a two-step reaction: proline is first activated by ATP to form Pro-AMP and then transferred to the acceptor end of tRNA(Pro). As ProRS can inadvertently accommodate and process non-cognate amino acids such as alanine and cysteine, to avoid such errors it has two additional distinct editing activities against alanine. One activity is designated as 'pretransfer' editing and involves the tRNA(Pro)-independent hydrolysis of activated Ala-AMP. The other activity is designated 'posttransfer' editing and involves deacylation of mischarged Ala-tRNA(Pro). The misacylated Cys-tRNA(Pro) is not edited by ProRS. The polypeptide is Proline--tRNA ligase (Delftia acidovorans (strain DSM 14801 / SPH-1)).